The sequence spans 287 residues: U1 small nuclear ribonucleoprotein A (287 aa).

In terms of domain architecture, RRM 1 spans 16-95 (HTIYINNLNE…KPMRIQYAKT (80 aa)). Position 66 is an N6-acetyllysine (lysine 66). The segment at 106 to 134 (TYVERDRKREKRKPKSQETPAAKKAVQGG) is disordered. Residues 125–134 (PAAKKAVQGG) are compositionally biased toward low complexity. Arginine 157 carries the omega-N-methylarginine modification. Residues 213–287 (HILFLTNLPE…NAMKISFAKK (75 aa)) form the RRM 2 domain.

Belongs to the RRM U1 A/B'' family. As to quaternary structure, U1 snRNP is composed of the 7 core Sm proteins SNRPB, SNRPD1, SNRPD2, SNRPD3, SNRPE, SNRPF and SNRPG that assemble in a heptameric protein ring on the Sm site of the small nuclear RNA to form the core snRNP, and at least three U1 snRNP-specific proteins SNRNP70/U1-70K, SNRPA/U1-A and SNRPC/U1-C. Interacts with SFPQ; component of a snRNP-free complex with SFPQ. Interacts with IVNS1ABP (via BACK domain); the interaction is indirect.

It is found in the nucleus. Its function is as follows. Component of the spliceosomal U1 snRNP, which is essential for recognition of the pre-mRNA 5' splice-site and the subsequent assembly of the spliceosome. U1 snRNP is the first snRNP to interact with pre-mRNA. This interaction is required for the subsequent binding of U2 snRNP and the U4/U6/U5 tri-snRNP. SNRPA binds stem loop II of U1 snRNA. In a snRNP-free form (SF-A) may be involved in coupled pre-mRNA splicing and polyadenylation process. May bind preferentially to the 5'-UGCAC-3' motif on RNAs. This chain is U1 small nuclear ribonucleoprotein A (Snrpa), found in Mus musculus (Mouse).